The primary structure comprises 363 residues: MAEVRLTDIRKSYGSLEVIKGVNLEVSSGEFVVFVGPSGCGKSTLLRMIAGLEDISSGELTIGGTVMNDVDPSKRGIAMVFQTYALYPHMTVRENMGFALRFAGMAKDEIERRVNAAAKILELDALMDRKPKALSGGQRQRVAIGRAIVRQPDVFLFDEPLSNLDAELRVHMRVEIARLHKELNATIVYVTHDQVEAMTLADKIVVMRGGIVEQVGAPLALYDDPDNMFVAGFIGSPRMNFLPAVVIGQAEGGQVTVALKARPDTQLTVACATPPQGGDAVTVGVRPEHFLPAGSGDTQLTAHVDVVEHLGNTSYVYAHTVPGEQIIIEQEERRHGGRYGDEIAVGISAKTSFLFDASGRRIR.

The 231-residue stretch at 4–234 folds into the ABC transporter domain; that stretch reads VRLTDIRKSY…PDNMFVAGFI (231 aa). Residue 36–43 participates in ATP binding; sequence GPSGCGKS.

It belongs to the ABC transporter superfamily.

The protein localises to the cell inner membrane. Functionally, part of the binding-protein-dependent transport system for lactose. Probably responsible for energy coupling to the transport system. The protein is Lactose transport ATP-binding protein LacK (lacK) of Rhizobium radiobacter (Agrobacterium tumefaciens).